We begin with the raw amino-acid sequence, 396 residues long: Probable sugar efflux transporter (396 aa).

The next 12 helical transmembrane spans lie at 15–35, 50–70, 81–101, 103–123, 136–156, 169–189, 209–229, 246–266, 275–295, 301–321, 333–353, and 364–384; these read VVTL…PVGL, VGIM…PFML, LICL…AWNF, VLVI…SITA, AQAL…GLPI, TFFA…KLLP, PALM…YTAY, FATV…LVFG, SLVS…LPAA, LAIL…GMQV, VAMA…ALVG, and AIGY…VLIF.

This sequence belongs to the major facilitator superfamily. SotB (TC 2.A.1.2) family.

It is found in the cell inner membrane. Involved in the efflux of sugars. The physiological role may be the reduction of the intracellular concentration of toxic sugars or sugar metabolites. The sequence is that of Probable sugar efflux transporter from Salmonella paratyphi C (strain RKS4594).